Consider the following 306-residue polypeptide: Isoaspartyl peptidase/L-asparaginase (306 aa).

Threonine 174 functions as the Nucleophile in the catalytic mechanism. Residues 202-205 (RIGD) and 224-227 (TGKG) each bind substrate.

It belongs to the Ntn-hydrolase family. Heterotetramer of two alpha and two beta chains arranged as a dimer of alpha/beta heterodimers. In terms of processing, cleaved into an alpha and beta chain by autocatalysis; this activates the enzyme. The N-terminal residue of the beta subunit is responsible for the nucleophile hydrolase activity. In terms of tissue distribution, developing seeds.

It carries out the reaction Cleavage of a beta-linked Asp residue from the N-terminus of a polypeptide.. Its function is as follows. Degrades proteins damaged by L-isoaspartyl residue formation (also known as beta-Asp residues). Also has L-asparaginase activity, which is used to liberate stored nitrogen during seed development. This chain is Isoaspartyl peptidase/L-asparaginase, found in Lupinus arboreus (Tree lupine).